The chain runs to 394 residues: Penicillopepsin-3 (394 aa).

The N-terminal stretch at 1-20 (MVSFTQLQLAFLGLSALGAA) is a signal peptide. A propeptide spans 21 to 70 (VPVTGTSEKKTFSLNQVKVAGTKTKNPAEHYANALRKYGAEVPSHVLAAA) (activation peptide). Residues 87 to 392 (YLTPIDVGGT…DASGPRLGFA (306 aa)) form the Peptidase A1 domain. Catalysis depends on residues aspartate 103 and aspartate 284. The cysteines at positions 320 and 355 are disulfide-linked.

This sequence belongs to the peptidase A1 family. Monomer.

The protein resides in the secreted. It catalyses the reaction Hydrolysis of proteins with broad specificity similar to that of pepsin A, preferring hydrophobic residues at P1 and P1', but also cleaving 20-Gly-|-Glu-21 in the B chain of insulin. Clots milk, and activates trypsinogen.. Functionally, secreted aspartic endopeptidase that allows assimilation of proteinaceous substrates. The scissile peptide bond is attacked by a nucleophilic water molecule activated by two aspartic residues in the active site. Shows a broad primary substrate specificity. Favors hydrophobic residues at the P1 and P1' positions, but can also activate trypsinogen and hydrolyze the B chain of insulin between positions 'Gly-20' and 'Glu-21'. This Penicillium janthinellum (Penicillium vitale) protein is Penicillopepsin-3.